The primary structure comprises 82 residues: Myosin light chain alkali (82 aa).

Positions 7 to 42 (GCYEDFIECLKLYDKEENGTMMLAELQHALLALGES) constitute an EF-hand domain.

In terms of assembly, myosin is a hexamer of 2 heavy chains and 4 light chains.

This Drosophila mauritiana (Fruit fly) protein is Myosin light chain alkali (Mlc1).